Consider the following 524-residue polypeptide: GMP synthase [glutamine-hydrolyzing] (524 aa).

The Glutamine amidotransferase type-1 domain occupies 9–207; that stretch reads RILILDFSSQ…VIHICQCIPN (199 aa). Cysteine 86 (nucleophile) is an active-site residue. Catalysis depends on residues histidine 181 and glutamate 183. The GMPS ATP-PPase domain maps to 208 to 399; the sequence is WTTKHIIEDS…LGLPADLIYR (192 aa). 235–241 contributes to the ATP binding site; it reads SGGVDSA.

As to quaternary structure, homodimer.

It catalyses the reaction XMP + L-glutamine + ATP + H2O = GMP + L-glutamate + AMP + diphosphate + 2 H(+). It participates in purine metabolism; GMP biosynthesis; GMP from XMP (L-Gln route): step 1/1. Functionally, catalyzes the synthesis of GMP from XMP. This chain is GMP synthase [glutamine-hydrolyzing], found in Coxiella burnetii (strain Dugway 5J108-111).